Reading from the N-terminus, the 139-residue chain is MARMPRVQAVAAPILRSDPRLEGVTVTTWVPDVDFREFPMINLRRIGGTRNPNAPTLHTLPVVEMTAYTRDGLIETEELYETALEVLYDAVENGTQTPAGYLTSIFETMGATQFSSLYQDSWRIQGLIRLGVRRPRTTL.

This is Gene 22 protein (22) from Mycobacterium phage L5 (Mycobacteriophage L5).